The chain runs to 95 residues: Cerebratulus toxin A-III (95 aa).

Cystine bridges form between Cys-17–Cys-38, Cys-23–Cys-34, and Cys-48–Cys-61.

Belongs to the worm cytolysin family.

It localises to the secreted. Its function is as follows. Permeabilizes a variety of cells. Forms large pores which allows the release of large proteins almost as rapidly as small organic molecules and inorganic ions. At sublytic concentrations, the toxin also inhibits protein kinase C and endogenous voltage-gated cation selective (sodium, calcium) channels occurring in the nervous and cardiovascular systems. This chain is Cerebratulus toxin A-III, found in Cerebratulus lacteus (Milky ribbon worm).